The chain runs to 548 residues: 5-epi-aristolochene synthase (548 aa).

Residues Arg264, Asp301, Asp305, Arg441, and Asp444 each contribute to the (2E,6E)-farnesyl diphosphate site. The Mg(2+) site is built by Asp301 and Asp305. Positions 301–305 (DDTFD) match the DDXXD motif motif. Residues Asp444, Asp445, Thr448, and Glu452 each contribute to the Mg(2+) site.

This sequence belongs to the terpene synthase family. In terms of assembly, monomer. Mg(2+) is required as a cofactor. In terms of processing, self-alkylated at Tyr-520 in the presence of (2Z,6E)-farnesyl diphosphate ((Z,E)-FPP). Self-alkylated at Asp-444 at warm temperature (42 degrees Celsius) in the presence of (2E,6E)-farnesyl diphosphate ((E,E)-FPP).

Its subcellular location is the cytoplasm. The catalysed reaction is (2E,6E)-farnesyl diphosphate = (+)-5-epi-aristolochene + diphosphate. The enzyme catalyses (2Z,6E)-farnesyl diphosphate = (+)-2-epi-prezizaene + diphosphate. It catalyses the reaction (2Z,6E)-farnesyl diphosphate = (-)-alpha-cedrene + diphosphate. It carries out the reaction (2Z,6E)-farnesyl diphosphate = (-)-beta-curcumene + diphosphate. The protein operates within secondary metabolite biosynthesis; terpenoid biosynthesis. Its activity is regulated as follows. Inhibited activity toward farnesyl diphosphate (FPP) by anilinogeranyl diphosphate (AGPP); AGPP undergoes a cyclization event leading to the formation of a novel macrocyclic paracyclophane alkaloid. Repressed by sesquilavandulyl diphosphate (SPP) via the induction of self-alkyation. Functionally, catalyzes the cyclization of trans,trans-farnesyl diphosphate (FPP) to the bicyclic intermediate 5-epi-aristolochene, initial step in the conversion of FPP to the sesquiterpenoid antifungal phytoalexin capsidiol. Produces germacrene A as an enzyme-bound intermediate that is not released by the enzyme, but is further cyclized to produce the bicyclic 5-epi-aristolochene. Mediates, at low levels, the formation of 4-epi-eremophilene and premnaspirodiene from trans,trans-farnesyl diphosphate. Also mediates the conversion of cis,trans-farnesyl diphosphate to cisoid minor products such as (+)-2-epi-prezizaene, (-)-alpha-cedrene and, to a lesser extent, (-)-beta-curcumene; also produces, at low levels, alpha-acoradiene and 4-epi-alpha-acoradiene, but barely nerolidol, alpha-bisabolol, epi-alpha-bisabolol and cis-farnesol. This chain is 5-epi-aristolochene synthase (EAS3), found in Nicotiana tabacum (Common tobacco).